The primary structure comprises 91 residues: Small ribosomal subunit protein bS20 (91 aa).

The disordered stretch occupies residues 1 to 26; it reads MANLKSSKKDIRRTARRKERNGEDRT.

This sequence belongs to the bacterial ribosomal protein bS20 family.

Its function is as follows. Binds directly to 16S ribosomal RNA. The polypeptide is Small ribosomal subunit protein bS20 (Leptospira biflexa serovar Patoc (strain Patoc 1 / Ames)).